The following is an 876-amino-acid chain: Pre-mRNA-splicing factor ATP-dependent RNA helicase-like protein PRP2 (876 aa).

Residues 1–111 (MSSITSETGK…KGLLGDSENE (111 aa)) are disordered. Residue Ser2 is modified to N-acetylserine. The segment covering 61–70 (VFSNTNQGPE) has biased composition (polar residues). The Helicase ATP-binding domain maps to 233–399 (LQEIKKNQVL…FDNCPIFNVP (167 aa)). Residue 246 to 253 (GETGSGKT) participates in ATP binding. The DEAH box motif lies at 346–349 (DEAH). Positions 424 to 598 (TIFQIHTTQS…NTVLLLLSLG (175 aa)) constitute a Helicase C-terminal domain.

The protein belongs to the DEAD box helicase family. DEAH subfamily. In terms of assembly, interacts directly with pre-mRNA. According to PubMed:2251118, associated with spliceosomes prior to and throughout step 1 of the splicing reaction. According to PubMed:8943336, it leaves the spliceosome before reaction 1. Interacts with SPP2.

Its subcellular location is the nucleus. It catalyses the reaction ATP + H2O = ADP + phosphate + H(+). Functionally, involved in pre-mRNA splicing. Is required together with ATP and at least one other factor, for the first cleavage-ligation reaction. Functions as a molecular motor in the activation of the precatalytic spliceosome for the first transesterification reaction of pre-mRNA splicing by hydrolyzing ATP to cause the activation of the spliceosome without the occurrence of splicing. Capable of hydrolyzing nucleoside triphosphates in the presence of single-stranded RNAs such as poly(U). The polypeptide is Pre-mRNA-splicing factor ATP-dependent RNA helicase-like protein PRP2 (PRP2) (Saccharomyces cerevisiae (strain ATCC 204508 / S288c) (Baker's yeast)).